Here is a 382-residue protein sequence, read N- to C-terminus: Chaperone protein DnaJ (382 aa).

The J domain maps to 5–69 (DYYEILGVSK…EKRARYDRFG (65 aa)). The CR-type zinc finger occupies 137 to 219 (GKETEIEIPR…CGGTGRVKRR (83 aa)). Cysteine 150, cysteine 153, cysteine 167, cysteine 170, cysteine 193, cysteine 196, cysteine 207, and cysteine 210 together coordinate Zn(2+). CXXCXGXG motif repeat units follow at residues 150–157 (CDTCQGSG), 167–174 (CPHCHGSG), 193–200 (CPVCGGTG), and 207–214 (CPTCGGTG). The segment at 154-175 (QGSGAKPGTSPTSCPHCHGSGQ) is disordered.

It belongs to the DnaJ family. As to quaternary structure, homodimer. Requires Zn(2+) as cofactor.

It is found in the cytoplasm. Its function is as follows. Participates actively in the response to hyperosmotic and heat shock by preventing the aggregation of stress-denatured proteins and by disaggregating proteins, also in an autonomous, DnaK-independent fashion. Unfolded proteins bind initially to DnaJ; upon interaction with the DnaJ-bound protein, DnaK hydrolyzes its bound ATP, resulting in the formation of a stable complex. GrpE releases ADP from DnaK; ATP binding to DnaK triggers the release of the substrate protein, thus completing the reaction cycle. Several rounds of ATP-dependent interactions between DnaJ, DnaK and GrpE are required for fully efficient folding. Also involved, together with DnaK and GrpE, in the DNA replication of plasmids through activation of initiation proteins. The protein is Chaperone protein DnaJ of Geobacillus kaustophilus (strain HTA426).